The sequence spans 409 residues: Arginine deiminase (409 aa).

The active-site Amidino-cysteine intermediate is cysteine 398.

The protein belongs to the arginine deiminase family.

The protein localises to the cytoplasm. The enzyme catalyses L-arginine + H2O = L-citrulline + NH4(+). Its pathway is amino-acid degradation; L-arginine degradation via ADI pathway; carbamoyl phosphate from L-arginine: step 1/2. This is Arginine deiminase from Metamycoplasma arthritidis (strain 158L3-1) (Mycoplasma arthritidis).